Here is a 57-residue protein sequence, read N- to C-terminus: DNA-directed RNA polymerase subunit Rpo6 (57 aa).

The protein belongs to the archaeal Rpo6/eukaryotic RPB6 RNA polymerase subunit family. Part of the RNA polymerase complex.

It localises to the cytoplasm. It carries out the reaction RNA(n) + a ribonucleoside 5'-triphosphate = RNA(n+1) + diphosphate. DNA-dependent RNA polymerase (RNAP) catalyzes the transcription of DNA into RNA using the four ribonucleoside triphosphates as substrates. This chain is DNA-directed RNA polymerase subunit Rpo6, found in Thermococcus onnurineus (strain NA1).